A 338-amino-acid chain; its full sequence is UDP-glucose 4-epimerase (338 aa).

Residues 11–12 (YI), 31–36 (DNLCNS), 58–59 (DI), 80–84 (FAGLK), Asn-99, Ser-124, Tyr-149, Lys-153, and Phe-178 contribute to the NAD(+) site. Residues Ser-124 and Tyr-149 each coordinate substrate. Tyr-149 acts as the Proton acceptor in catalysis. Residues Asn-179, 199–200 (NL), 216–218 (AIF), Arg-231, 292–295 (REGD), and Tyr-299 contribute to the substrate site.

It belongs to the NAD(P)-dependent epimerase/dehydratase family. In terms of assembly, homodimer. Requires NAD(+) as cofactor.

It catalyses the reaction UDP-alpha-D-glucose = UDP-alpha-D-galactose. It functions in the pathway carbohydrate metabolism; galactose metabolism. Its activity is regulated as follows. Inhibited by UDP-phenol and NaBH3CN. In terms of biological role, involved in the metabolism of galactose. Catalyzes the conversion of UDP-galactose (UDP-Gal) to UDP-glucose (UDP-Glc) through a mechanism involving the transient reduction of NAD. It is only active on UDP-galactose and UDP-glucose. This Escherichia coli (strain K12) protein is UDP-glucose 4-epimerase (galE).